The chain runs to 417 residues: CinA-like protein (417 aa).

The protein belongs to the CinA family.

In Leptospira biflexa serovar Patoc (strain Patoc 1 / Ames), this protein is CinA-like protein.